The sequence spans 320 residues: Malate dehydrogenase (320 aa).

Residues 10 to 15 (GSGMIG) and Asp-34 each bind NAD(+). Substrate is bound by residues Arg-83 and Arg-89. NAD(+) contacts are provided by residues Asn-96 and 119 to 121 (ITN). The substrate site is built by Asn-121 and Arg-152. Residue His-176 is the Proton acceptor of the active site.

This sequence belongs to the LDH/MDH superfamily. MDH type 3 family.

The catalysed reaction is (S)-malate + NAD(+) = oxaloacetate + NADH + H(+). Catalyzes the reversible oxidation of malate to oxaloacetate. The chain is Malate dehydrogenase from Brucella anthropi (strain ATCC 49188 / DSM 6882 / CCUG 24695 / JCM 21032 / LMG 3331 / NBRC 15819 / NCTC 12168 / Alc 37) (Ochrobactrum anthropi).